The sequence spans 117 residues: Immunoglobulin lambda variable 2 (117 aa).

Residues 1–19 (MAWTSLILSLLALCSGASS) form the signal peptide. Position 20 is a pyrrolidone carboxylic acid (Gln-20). The 98-residue stretch at 20 to 117 (QAVVTQESAL…FCALWYSTHF (98 aa)) folds into the Ig-like domain.

In Mus musculus (Mouse), this protein is Immunoglobulin lambda variable 2.